Consider the following 413-residue polypeptide: MPSDDRFADAVKPALEALLSDLQHTTEVLRRAHISDRRSQSRDDFEQSYDLQGNLNTQSVSNGNITTSPYKRRSSEGKDYSKSQERIYENESRLNPPVYSRPSVQSLLSQVEEPPIRASSSRKSLGPPSQAQSYSDVRSNGRSPSRDPLHSDSMIGTMNGELSSKHGVNTIPKGDCAACGKPIIGQVVIALGKMWHPEHYTCCECGAELGQRPFFERNGRAFCEEDYHNQFSPKCQGCHRAITDRCVSVMNKNFHIECFTCAECNQPFGEDGFHEKNGQTYCKRDFFRLFAPKCNGCSQPITSNFITALGTHWHPDCFVCQHCGVSFNGASFFEHNGAPLCERHYHESRGSICSQCRGAINGRCVAAMGRKFHPEHFRCSYCNHQLTKGTFKEVDRRPFCHKCYNNTYALTPA.

Positions 33-45 (HISDRRSQSRDDF) are enriched in basic and acidic residues. Positions 33 to 157 (HISDRRSQSR…PLHSDSMIGT (125 aa)) are disordered. A compositionally biased stretch (polar residues) spans 49 to 69 (YDLQGNLNTQSVSNGNITTSP). Basic and acidic residues predominate over residues 73–92 (RSSEGKDYSKSQERIYENES). Positions 118–143 (ASSSRKSLGPPSQAQSYSDVRSNGRS) are enriched in polar residues. LIM zinc-binding domains are found at residues 174 to 232 (GDCA…NQFS), 233 to 292 (PKCQ…LFAP), 293 to 350 (KCNG…ESRG), and 351 to 410 (SICS…TYAL).

Belongs to the paxillin family. As to expression, isoform a: Expressed in all 95 body wall muscle cells as well as in the pharyngeal muscle cells (at protein level). Isoform c: Expressed in the body wall muscle cells and in the pharyngeal muscle cells.

It is found in the cell junction. Its subcellular location is the adherens junction. It localises to the cell membrane. The protein localises to the cytoplasm. The protein resides in the myofibril. It is found in the sarcomere. Its subcellular location is the m line. It localises to the cell projection. The protein localises to the podosome. Functionally, required for myofilament organization of the pharyngeal sarcomeres and for pharyngeal muscle contractions and hence for pharyngeal pumping. Together with lin-8, might be required for myofilament organization in the body wall muscles. The chain is Paxillin homolog 1 (pxl-1) from Caenorhabditis elegans.